Consider the following 788-residue polypeptide: Protein FAR1-RELATED SEQUENCE 5 (788 aa).

Residues 87-179 (AFYNSYARRI…VKDHNHELVP (93 aa)) form the FAR1 domain. The MULE domain occupies 299–395 (TVTFDTTYRS…CKWHILKKCQ (97 aa)). The SWIM-type zinc finger occupies 584–616 (FNVLEMRANCSCQMFEFSGIICRHILAVFRVTN). The disordered stretch occupies residues 713 to 733 (SSVTGGKHQQEVLAQPEPEDE). A coiled-coil region spans residues 731-768 (EDEMDKKINQLRNELELANRKCEAYRTNLLSVLKEMED).

Belongs to the FHY3/FAR1 family. Expressed in hypocotyls, rosette and cauline leaves, inflorescences stems, flowers and siliques.

It localises to the nucleus. In terms of biological role, putative transcription activator involved in regulating light control of development. In Arabidopsis thaliana (Mouse-ear cress), this protein is Protein FAR1-RELATED SEQUENCE 5 (FRS5).